Reading from the N-terminus, the 363-residue chain is Chorismate synthase (363 aa).

NADP(+) contacts are provided by Arg48 and Arg54. Residues 125–127 (RSS), 237–238 (NA), Gly277, 292–296 (KPTSS), and Arg318 each bind FMN.

Belongs to the chorismate synthase family. In terms of assembly, homotetramer. Requires FMNH2 as cofactor.

It catalyses the reaction 5-O-(1-carboxyvinyl)-3-phosphoshikimate = chorismate + phosphate. The protein operates within metabolic intermediate biosynthesis; chorismate biosynthesis; chorismate from D-erythrose 4-phosphate and phosphoenolpyruvate: step 7/7. In terms of biological role, catalyzes the anti-1,4-elimination of the C-3 phosphate and the C-6 proR hydrogen from 5-enolpyruvylshikimate-3-phosphate (EPSP) to yield chorismate, which is the branch point compound that serves as the starting substrate for the three terminal pathways of aromatic amino acid biosynthesis. This reaction introduces a second double bond into the aromatic ring system. This Stutzerimonas stutzeri (strain A1501) (Pseudomonas stutzeri) protein is Chorismate synthase.